The following is a 332-amino-acid chain: 4-hydroxy-3-methylbut-2-enyl diphosphate reductase (332 aa).

Cys13 serves as a coordination point for [4Fe-4S] cluster. 2 residues coordinate (2E)-4-hydroxy-3-methylbut-2-enyl diphosphate: His41 and His75. Residues His41 and His75 each contribute to the dimethylallyl diphosphate site. Residues His41 and His75 each coordinate isopentenyl diphosphate. Cys97 provides a ligand contact to [4Fe-4S] cluster. His125 is a binding site for (2E)-4-hydroxy-3-methylbut-2-enyl diphosphate. His125 contributes to the dimethylallyl diphosphate binding site. Isopentenyl diphosphate is bound at residue His125. Residue Glu127 is the Proton donor of the active site. Thr168 is a (2E)-4-hydroxy-3-methylbut-2-enyl diphosphate binding site. Cys229 provides a ligand contact to [4Fe-4S] cluster. (2E)-4-hydroxy-3-methylbut-2-enyl diphosphate-binding residues include Ser257, Ser258, Asn259, and Ser306. Residues Ser257, Ser258, Asn259, and Ser306 each contribute to the dimethylallyl diphosphate site. 4 residues coordinate isopentenyl diphosphate: Ser257, Ser258, Asn259, and Ser306.

This sequence belongs to the IspH family. Requires [4Fe-4S] cluster as cofactor.

The enzyme catalyses isopentenyl diphosphate + 2 oxidized [2Fe-2S]-[ferredoxin] + H2O = (2E)-4-hydroxy-3-methylbut-2-enyl diphosphate + 2 reduced [2Fe-2S]-[ferredoxin] + 2 H(+). It catalyses the reaction dimethylallyl diphosphate + 2 oxidized [2Fe-2S]-[ferredoxin] + H2O = (2E)-4-hydroxy-3-methylbut-2-enyl diphosphate + 2 reduced [2Fe-2S]-[ferredoxin] + 2 H(+). It participates in isoprenoid biosynthesis; dimethylallyl diphosphate biosynthesis; dimethylallyl diphosphate from (2E)-4-hydroxy-3-methylbutenyl diphosphate: step 1/1. The protein operates within isoprenoid biosynthesis; isopentenyl diphosphate biosynthesis via DXP pathway; isopentenyl diphosphate from 1-deoxy-D-xylulose 5-phosphate: step 6/6. In terms of biological role, catalyzes the conversion of 1-hydroxy-2-methyl-2-(E)-butenyl 4-diphosphate (HMBPP) into a mixture of isopentenyl diphosphate (IPP) and dimethylallyl diphosphate (DMAPP). Acts in the terminal step of the DOXP/MEP pathway for isoprenoid precursor biosynthesis. The sequence is that of 4-hydroxy-3-methylbut-2-enyl diphosphate reductase from Chlorobaculum tepidum (strain ATCC 49652 / DSM 12025 / NBRC 103806 / TLS) (Chlorobium tepidum).